The following is a 292-amino-acid chain: 4-hydroxy-tetrahydrodipicolinate synthase (292 aa).

Pyruvate is bound at residue threonine 45. Tyrosine 133 acts as the Proton donor/acceptor in catalysis. The Schiff-base intermediate with substrate role is filled by lysine 161. Residue isoleucine 203 coordinates pyruvate.

Belongs to the DapA family. Homodimer.

Its subcellular location is the cytoplasm. The enzyme catalyses L-aspartate 4-semialdehyde + pyruvate = (2S,4S)-4-hydroxy-2,3,4,5-tetrahydrodipicolinate + H2O + H(+). The protein operates within amino-acid biosynthesis; L-lysine biosynthesis via DAP pathway; (S)-tetrahydrodipicolinate from L-aspartate: step 3/4. Functionally, catalyzes the condensation of (S)-aspartate-beta-semialdehyde [(S)-ASA] and pyruvate to 4-hydroxy-tetrahydrodipicolinate (HTPA). This Pseudomonas putida (strain W619) protein is 4-hydroxy-tetrahydrodipicolinate synthase.